We begin with the raw amino-acid sequence, 217 residues long: Thymidylate kinase (217 aa).

An ATP-binding site is contributed by 16-23 (GIDGAGKT).

This sequence belongs to the thymidylate kinase family.

It carries out the reaction dTMP + ATP = dTDP + ADP. Its function is as follows. Phosphorylation of dTMP to form dTDP in both de novo and salvage pathways of dTTP synthesis. The polypeptide is Thymidylate kinase (Xylella fastidiosa (strain M12)).